We begin with the raw amino-acid sequence, 255 residues long: Probable ubiquitin carboxyl-terminal hydrolase (255 aa).

Residues 13-237 (NWIPLEANPE…IRFNLMGLVK (225 aa)) form the UCH catalytic domain. The interval 16–21 (PLEANP) is interaction with ubiquitin. The active-site Nucleophile is the Cys-103. His-177 serves as the catalytic Proton donor. An interaction with ubiquitin region spans residues 227–232 (EIRFNL). A disordered region spans residues 235–255 (LVKKPNEESEEEEEKEKEETK). Residues 242 to 255 (ESEEEEEKEKEETK) are compositionally biased toward acidic residues.

This sequence belongs to the peptidase C12 family.

The protein resides in the cytoplasm. The catalysed reaction is Thiol-dependent hydrolysis of ester, thioester, amide, peptide and isopeptide bonds formed by the C-terminal Gly of ubiquitin (a 76-residue protein attached to proteins as an intracellular targeting signal).. Its function is as follows. Ubiquitin-protein hydrolase is involved both in the processing of ubiquitin precursors and of ubiquitinated proteins. This enzyme is a thiol protease that recognizes and hydrolyzes a peptide bond at the C-terminal glycine of either ubiquitin or nedd8. The polypeptide is Probable ubiquitin carboxyl-terminal hydrolase (uch1) (Dictyostelium discoideum (Social amoeba)).